The chain runs to 146 residues: Large ribosomal subunit protein uL16 (146 aa).

This sequence belongs to the universal ribosomal protein uL16 family. Part of the 50S ribosomal subunit.

In terms of biological role, binds 23S rRNA and is also seen to make contacts with the A and possibly P site tRNAs. The chain is Large ribosomal subunit protein uL16 from Lactobacillus helveticus (strain DPC 4571).